Consider the following 185-residue polypeptide: Elongation factor P (185 aa).

This sequence belongs to the elongation factor P family.

The protein localises to the cytoplasm. The protein operates within protein biosynthesis; polypeptide chain elongation. Functionally, involved in peptide bond synthesis. Stimulates efficient translation and peptide-bond synthesis on native or reconstituted 70S ribosomes in vitro. Probably functions indirectly by altering the affinity of the ribosome for aminoacyl-tRNA, thus increasing their reactivity as acceptors for peptidyl transferase. The chain is Elongation factor P from Kosmotoga olearia (strain ATCC BAA-1733 / DSM 21960 / TBF 19.5.1).